The sequence spans 204 residues: Large ribosomal subunit protein uL4 (204 aa).

The segment at 49-74 (AKKRGEVSGGGKKPWSQKGGGRARAG) is disordered. Positions 55–71 (VSGGGKKPWSQKGGGRA) are enriched in gly residues.

It belongs to the universal ribosomal protein uL4 family. Part of the 50S ribosomal subunit.

Functionally, one of the primary rRNA binding proteins, this protein initially binds near the 5'-end of the 23S rRNA. It is important during the early stages of 50S assembly. It makes multiple contacts with different domains of the 23S rRNA in the assembled 50S subunit and ribosome. Forms part of the polypeptide exit tunnel. This chain is Large ribosomal subunit protein uL4, found in Wolinella succinogenes (strain ATCC 29543 / DSM 1740 / CCUG 13145 / JCM 31913 / LMG 7466 / NCTC 11488 / FDC 602W) (Vibrio succinogenes).